Here is a 488-residue protein sequence, read N- to C-terminus: Transmembrane protein 39A (488 aa).

2 N-linked (GlcNAc...) asparagine glycosylation sites follow: Asn-31 and Asn-39. Transmembrane regions (helical) follow at residues 72 to 92 (GLLF…IQYI), 110 to 130 (TSLN…VMLA), and 155 to 175 (LITA…WTLV). Residue Asn-180 is glycosylated (N-linked (GlcNAc...) asparagine). Helical transmembrane passes span 182–202 (SVLN…LCCF), 287–307 (EVLF…LCFV), 319–339 (CEHL…QLLP), 420–440 (LLNL…YSLL), and 446–466 (NHTL…FKLL).

The protein belongs to the TMEM39 family.

Its subcellular location is the endoplasmic reticulum membrane. In terms of biological role, regulates autophagy by controlling the spatial distribution and levels of the intracellular phosphatidylinositol 4-phosphate (PtdIns(4)P) pools. Modulates (PtdIns(4)P) levels by regulating the ER-to-Golgi trafficking of the phosphatidylinositide phosphatase SACM1L. This Xenopus tropicalis (Western clawed frog) protein is Transmembrane protein 39A (tmem39a).